The primary structure comprises 345 residues: tRNA N6-adenosine threonylcarbamoyltransferase (345 aa).

Residues His-111 and His-115 each coordinate Fe cation. Substrate contacts are provided by residues 134 to 138, Asp-167, Gly-180, and Asn-277; that span reads LVSGG. Asp-305 is a Fe cation binding site.

The protein belongs to the KAE1 / TsaD family. Requires Fe(2+) as cofactor.

The protein localises to the cytoplasm. It catalyses the reaction L-threonylcarbamoyladenylate + adenosine(37) in tRNA = N(6)-L-threonylcarbamoyladenosine(37) in tRNA + AMP + H(+). Functionally, required for the formation of a threonylcarbamoyl group on adenosine at position 37 (t(6)A37) in tRNAs that read codons beginning with adenine. Is involved in the transfer of the threonylcarbamoyl moiety of threonylcarbamoyl-AMP (TC-AMP) to the N6 group of A37, together with TsaE and TsaB. TsaD likely plays a direct catalytic role in this reaction. This Laribacter hongkongensis (strain HLHK9) protein is tRNA N6-adenosine threonylcarbamoyltransferase.